A 127-amino-acid polypeptide reads, in one-letter code: Ribonuclease P protein component (127 aa).

This sequence belongs to the RnpA family. In terms of assembly, consists of a catalytic RNA component (M1 or rnpB) and a protein subunit.

The catalysed reaction is Endonucleolytic cleavage of RNA, removing 5'-extranucleotides from tRNA precursor.. Functionally, RNaseP catalyzes the removal of the 5'-leader sequence from pre-tRNA to produce the mature 5'-terminus. It can also cleave other RNA substrates such as 4.5S RNA. The protein component plays an auxiliary but essential role in vivo by binding to the 5'-leader sequence and broadening the substrate specificity of the ribozyme. The protein is Ribonuclease P protein component of Prochlorococcus marinus (strain SARG / CCMP1375 / SS120).